The primary structure comprises 196 residues: UPF0056 membrane protein BUsg_434 (196 aa).

Transmembrane regions (helical) follow at residues 8-28, 45-65, 71-91, 105-125, 134-154, and 174-194; these read TILLILIMDPLGNLPIFMTIL, IIALIVMLIFLFVGEKILTIL, TVSISGGIILFLIAIKMIFPS, FLVPLAIPLVAGPSLLATLML, MPYLVGSLLIAWFFTIIILLL, and MGLILIMLSTQMFLDGIKAWF.

This sequence belongs to the UPF0056 (MarC) family.

The protein localises to the cell membrane. The chain is UPF0056 membrane protein BUsg_434 from Buchnera aphidicola subsp. Schizaphis graminum (strain Sg).